An 828-amino-acid polypeptide reads, in one-letter code: MEESSVTIGTIDVSYLPNSSEYSLGRCKHTNEDWVDCGFKPTFFRSATLKWKESLMSRKRPFVGRCCYSCTPQSWERFFNPSIPSLGLRNVIYINETHTRHRGWLARRLSYILFVQERDVHKGMFATSITDNVLNSSRVQEAIAEVAAELNPDGSAQQQSKAIQKVKRKARKILQEMVATVSPGMIRLTGWVLLKLFNSFFWNIQIHKGQLEMVKAATETNLPLLFLPVHRSHIDYLLLTFILFCHNIKAPYIASGNNLNIPIFSTLIHKLGGFFIRRRLDETPDGRKDILYRALLHGHIVELLRQQQFLEIFLEGTRSRSGKTSCARAGLLSVVVDTLSSNTIPDILVIPVGISYDRIIEGHYNGEQLGKPKKNESLWSVARGVIRMLRKNYGYVRVDFAQPFSLKEYLEGQSQKPVSAPLSLEQALLPAILPSRPDAAAAEHEDMSSNESRNAADEAFRRRLIANLAEHILFTASKSCAIMSTHIVACLLLYRHRQGIHLSTLVEDFFVMKEEVLARDFDLGFSGNSEDVVMHAIQLLGNCVTITHTSRKDEFFITPSTTVPSVFELNFYSNGVLHVFIMEAIIACSIYAVQNKRGSGGSAGGLGNLISQEQLVRKAASLCYLLSNEGTISLPCQTFYQVCQETVGKFIQYGILTVAEQDDQEDVSPGLAEQQWNKKLPEPLNWRSDEEDEDSDFGEEQRDCYLKVSQAKEHQQFITFLQRLLGPLLEAYSSAAIFVHTFRGPVPESEYLQKLHRYLLTRTERNVAVYAESATYCLVKNAVKMFKDIGVFKETKQKRASVLELSTTFLPQGSRQKLLEYILSFVVL.

At 1–87 the chain is on the cytoplasmic side; sequence MEESSVTIGT…FFNPSIPSLG (87 aa). Positions 80-120 are important for mitochondrial localization; sequence NPSIPSLGLRNVIYINETHTRHRGWLARRLSYILFVQERDV. An intramembrane segment occupies 88-118; it reads LRNVIYINETHTRHRGWLARRLSYILFVQER. The Cytoplasmic portion of the chain corresponds to 119–828; sequence DVHKGMFATS…LEYILSFVVL (710 aa). The short motif at 230–235 is the HXXXXD motif element; the sequence is HRSHID. CoA contacts are provided by Arg-278, Arg-279, Lys-288, Arg-293, and Arg-328. Residue Ser-380 is modified to Phosphoserine. Residue Arg-462 coordinates CoA. A phosphoserine mark is found at Ser-688 and Ser-695. Residues Lys-780 and Lys-784 each carry the N6-acetyllysine modification.

Belongs to the GPAT/DAPAT family.

The protein resides in the mitochondrion outer membrane. It carries out the reaction sn-glycerol 3-phosphate + an acyl-CoA = a 1-acyl-sn-glycero-3-phosphate + CoA. The enzyme catalyses sn-glycerol 3-phosphate + hexadecanoyl-CoA = 1-hexadecanoyl-sn-glycero-3-phosphate + CoA. The catalysed reaction is (9Z,12Z)-octadecadienoyl-CoA + sn-glycerol 3-phosphate = 1-(9Z,12Z)-octadecadienoyl-sn-glycero-3-phosphate + CoA. It catalyses the reaction sn-glycerol 3-phosphate + (9Z)-octadecenoyl-CoA = 1-(9Z-octadecenoyl)-sn-glycero-3-phosphate + CoA. It carries out the reaction sn-glycerol 3-phosphate + octadecanoyl-CoA = 1-octadecanoyl-sn-glycero-3-phosphate + CoA. The enzyme catalyses dodecanoyl-CoA + sn-glycerol 3-phosphate = 1-dodecanoyl-sn-glycerol 3-phosphate + CoA. The catalysed reaction is 1-acyl-sn-glycero-3-phospho-(1'-sn-glycerol) + an acyl-CoA = a 1,2-diacyl-sn-glycero-3-phospho-(1'-sn-glycerol) + CoA. It participates in phospholipid metabolism; CDP-diacylglycerol biosynthesis; CDP-diacylglycerol from sn-glycerol 3-phosphate: step 1/3. In terms of biological role, mitochondrial membrane protein that catalyzes the essential first step of biosynthesis of glycerolipids such as triglycerides, phosphatidic acids and lysophosphatidic acids. Esterifies acyl-group from acyl-coenzyme A (acyl-CoA) to the sn-1 position of glycerol-3-phosphate, to produce lysophosphatidic acid. Has a narrow hydrophobic binding cleft that selects for a linear acyl chain. Catalytic activity is higher for substrates with a 16-carbon acyl chain. In Rattus norvegicus (Rat), this protein is Glycerol-3-phosphate acyltransferase 1, mitochondrial.